The chain runs to 535 residues: uncharacterized protein (535 aa).

Positions Met1–Lys34 are disordered. Positions His15–Lys34 are enriched in basic and acidic residues.

This is an uncharacterized protein from Escherichia coli (strain K12).